Here is a 154-residue protein sequence, read N- to C-terminus: MPLYESVLIARNDVTQQQVESVADHVASLIEAEGGAIKKREYWGLRTLAYRIKKNRKGHYMLLGLDAKPATITEVERQLRLNEDVLRFMTIRVEEIDDVPSVILSRKSDDRERGFRGPKPPGRFESGRKRGYDDREEFRARAGGDDDDRGLDQE.

The tract at residues 107–154 (KSDDRERGFRGPKPPGRFESGRKRGYDDREEFRARAGGDDDDRGLDQE) is disordered. The span at 125-154 (ESGRKRGYDDREEFRARAGGDDDDRGLDQE) shows a compositional bias: basic and acidic residues.

It belongs to the bacterial ribosomal protein bS6 family.

Functionally, binds together with bS18 to 16S ribosomal RNA. This chain is Small ribosomal subunit protein bS6, found in Granulibacter bethesdensis (strain ATCC BAA-1260 / CGDNIH1).